A 541-amino-acid chain; its full sequence is MTTVSDFTAHQTATAVVARKGTAGPRPSAVDAPATLTDEHGDVYVEPGLTPLAAREANRSALVGLLDAAGVGHFAVRGTVDHGTVVGVAEEDRERALQAVFRGLGQYPGHLSVVDPDAPRPAKPVSSRDPRAWREVVGARILQVSWYRTDPGRHLLLGHEYGCALEFWRRQGTCLVAPRANRATWAVAVGGPNVMGAARLFSRFVSDWTPGHLAPALPTRPEFLVNCADDIAFPVDAVYTWVDGNDPAWKQRKAQAKGEVYHAESASDARFISRDELRYSIRSLHLFAPWIRNIYVVTDDQVPAWMREDLPGARIATHREIFRNPEDLPTFNSHSIESQLHHIEGLAEHFLYFNDDMFMGRPVAPHSFFTPNGTARYFPSRNRIPQGAVAETDSPVDAACKNNRALLHERFGKVITQPMEHIPYALRRSAMAEAELEFPEAWARTSASRFRAMTDLSPTSSFALYYAALTGRAQPGSMPFTYIQLAVPDLADRLQRLLDGRDQDSFCLNDAFSTPEDTEAQQELLDDFFTSYFPTPSPYER.

It belongs to the stealth family.

The chain is Exopolysaccharide phosphotransferase SCO6021 from Streptomyces coelicolor (strain ATCC BAA-471 / A3(2) / M145).